Here is a 504-residue protein sequence, read N- to C-terminus: Apoptosis inhibitor 5 (504 aa).

Residues 1–360 are ARM-like and Heat-like helical repeats; that stretch reads MPTVEELYRN…HQLGRKLPDF (360 aa). N6-acetyllysine is present on lysine 251. The tract at residues 370–391 is leucine-zipper; that stretch reads LKDFKIRLQYFARGLQVYIRQL. Threonine 399 is subject to Phosphothreonine. A disordered region spans residues 452 to 504; it reads GQKRASEDTTSGSPPKKSSAGPKRDARQIYNPPSGKYSSNLGNFNYERSLQGK. A Nuclear localization signal motif is present at residues 454 to 475; it reads KRASEDTTSGSPPKKSSAGPKR. Residues serine 462, serine 464, and serine 469 each carry the phosphoserine modification. Residues 462–472 show a composition bias toward low complexity; the sequence is SGSPPKKSSAG. Residues 487 to 504 are compositionally biased toward polar residues; that stretch reads KYSSNLGNFNYERSLQGK.

It belongs to the API5 family. In terms of assembly, monomer. Interacts with FGF2 and ACIN1. Post-translationally, acetylation at Lys-251 impairs antiapoptotic function.

It localises to the nucleus. The protein resides in the cytoplasm. Its function is as follows. Antiapoptotic factor that may have a role in protein assembly. Negatively regulates ACIN1. By binding to ACIN1, it suppresses ACIN1 cleavage from CASP3 and ACIN1-mediated DNA fragmentation. Also known to efficiently suppress E2F1-induced apoptosis. This is Apoptosis inhibitor 5 (API5) from Pongo abelii (Sumatran orangutan).